Consider the following 586-residue polypeptide: Mitogen-activated protein kinase 15 (586 aa).

The 292-residue stretch at 14–305 (YDIKKRLGKG…AEEALEHPYV (292 aa)) folds into the Protein kinase domain. ATP-binding positions include 20-28 (LGKGAYGIV) and lysine 43. Aspartate 138 (proton acceptor) is an active-site residue. 2 disordered regions span residues 354 to 506 (QKRE…DAPP) and 520 to 539 (NQRT…RFGR). Over residues 382–393 (PAPPAGTNPAPQ) the composition is skewed to pro residues. Positions 400–414 (PQRAAIAAPNQPPAQ) are enriched in low complexity. Positions 415–439 (KDSTQQSPKIKAPSSNPITHSTTHG) are enriched in polar residues. The span at 452–463 (AGQQGAAGTTAQ) shows a compositional bias: low complexity. Over residues 464-473 (EVRKEVESRS) the composition is skewed to basic and acidic residues. Residues 484 to 498 (FSHSQQARAAATNSA) are compositionally biased toward polar residues.

As to quaternary structure, interacts with dvl2.

It localises to the cytoplasm. It is found in the cytoskeleton. Its subcellular location is the cilium basal body. The protein localises to the cell projection. The protein resides in the cilium. It localises to the cell junction. It carries out the reaction L-seryl-[protein] + ATP = O-phospho-L-seryl-[protein] + ADP + H(+). The enzyme catalyses L-threonyl-[protein] + ATP = O-phospho-L-threonyl-[protein] + ADP + H(+). Functionally, atypical MAPK protein that regulates ciliogenesis by phosphorylating rcsd1 through its binding with dvl2. The chain is Mitogen-activated protein kinase 15 from Xenopus laevis (African clawed frog).